Consider the following 343-residue polypeptide: Heat-inducible transcription repressor HrcA (343 aa).

Belongs to the HrcA family.

Functionally, negative regulator of class I heat shock genes (grpE-dnaK-dnaJ and groELS operons). Prevents heat-shock induction of these operons. This is Heat-inducible transcription repressor HrcA from Mycobacterium tuberculosis (strain ATCC 25177 / H37Ra).